Consider the following 112-residue polypeptide: Large ribosomal subunit protein eL30 (112 aa).

It belongs to the eukaryotic ribosomal protein eL30 family. As to expression, expressed in roots and leaves.

The chain is Large ribosomal subunit protein eL30 from Triticum aestivum (Wheat).